Consider the following 302-residue polypeptide: Probable alpha-L-glutamate ligase (302 aa).

In terms of domain architecture, ATP-grasp spans 104–287 (LQLLSRKGVG…VAGLLIKFIE (184 aa)). Residues lysine 141, 178–179 (EY), aspartate 187, and 211–213 (RSN) contribute to the ATP site. Mg(2+)-binding residues include aspartate 248, glutamate 260, and asparagine 262. Mn(2+)-binding residues include aspartate 248, glutamate 260, and asparagine 262.

This sequence belongs to the RimK family. It depends on Mg(2+) as a cofactor. Requires Mn(2+) as cofactor.

This Alcanivorax borkumensis (strain ATCC 700651 / DSM 11573 / NCIMB 13689 / SK2) protein is Probable alpha-L-glutamate ligase.